We begin with the raw amino-acid sequence, 896 residues long: Translation initiation factor IF-2 (896 aa).

Positions Leu-32–His-306 are disordered. 2 stretches are compositionally biased toward polar residues: residues Ala-35–Ala-48 and Ala-114–Glu-126. Residues Ala-156–Pro-170 show a composition bias toward basic and acidic residues. The segment covering Gln-213–Ala-237 has biased composition (polar residues). Residues Arg-256–Gly-280 show a composition bias toward basic and acidic residues. Positions Ile-401 to Lys-570 constitute a tr-type G domain. Positions Gly-410–Thr-417 are G1. Gly-410–Thr-417 serves as a coordination point for GTP. The tract at residues Ala-435–His-439 is G2. The segment at Asp-456–Gly-459 is G3. GTP is bound by residues Asp-456–His-460 and Asn-510–Asp-513. The segment at Asn-510–Asp-513 is G4. The G5 stretch occupies residues Ser-546–Lys-548.

Belongs to the TRAFAC class translation factor GTPase superfamily. Classic translation factor GTPase family. IF-2 subfamily.

The protein localises to the cytoplasm. Functionally, one of the essential components for the initiation of protein synthesis. Protects formylmethionyl-tRNA from spontaneous hydrolysis and promotes its binding to the 30S ribosomal subunits. Also involved in the hydrolysis of GTP during the formation of the 70S ribosomal complex. The sequence is that of Translation initiation factor IF-2 (infB) from Chlamydia muridarum (strain MoPn / Nigg).